Consider the following 492-residue polypeptide: Trehalose-phosphatase (492 aa).

Residues 1–55 (MTETVTDQGKQRSSKLQKNEAAKDEQVEGKGKETLESGTDKSAEQNSSLLVGQPD) form a disordered region. The segment covering 17–43 (QKNEAAKDEQVEGKGKETLESGTDKSA) has biased composition (basic and acidic residues). 2 residues coordinate Mg(2+): Asp213 and Asp215. Asp215 (proton donor/acceptor) is an active-site residue. 332 to 334 (QRK) contributes to the substrate binding site. Asp424 serves as a coordination point for Mg(2+).

This sequence belongs to the gob-1 trehalose phosphatase family. The cofactor is Mg(2+).

It catalyses the reaction alpha,alpha-trehalose 6-phosphate + H2O = alpha,alpha-trehalose + phosphate. With respect to regulation, inhibited by trehalose 6-sulfate. Catalyzes the hydrolysis of trehalose 6-phosphate to trehalose and phosphate; prevents the accumulation of toxic levels of trehalose 6-phosphate. In Brugia malayi (Filarial nematode worm), this protein is Trehalose-phosphatase.